A 273-amino-acid polypeptide reads, in one-letter code: MSSKKVKYNPRKSASQNEATSASAGSKAFGFNSAKKEKLHRMALSMEAIEDVEDQSFNGKSSNLVRKRRGLDEDIDEFSSSSEDERKPARHPQSSSQKPFASSTYNVELPTSPTKITNIGQSSPRALRYLSPESQRIKNAKMKSPISTHLAKYSIHHMGTPPSKPSFLSSSVSSPASSKQKSLFQCTKDLEKRYINRVHRSSETELVQLSSIKVLDRFLSDIYLVEAEKNEEKCTVLLLKRSNTDVDNSSSLSLTLPLCKFTKNGHQVHIHPC.

The span at 1–10 (MSSKKVKYNP) shows a compositional bias: basic residues. Disordered stretches follow at residues 1–32 (MSSKKVKYNPRKSASQNEATSASAGSKAFGFN) and 50–124 (EDVE…QSSP). Polar residues-rich tracts occupy residues 12-24 (KSASQNEATSASA), 55-64 (QSFNGKSSNL), and 92-124 (PQSSSQKPFASSTYNVELPTSPTKITNIGQSSP). Residue S123 is modified to Phosphoserine.

The protein localises to the nucleus. The protein resides in the cytoplasm. It is found in the cytoskeleton. Its subcellular location is the spindle. This is an uncharacterized protein from Schizosaccharomyces pombe (strain 972 / ATCC 24843) (Fission yeast).